Reading from the N-terminus, the 347-residue chain is Gibberellin 3-beta-dioxygenase 2 (347 aa).

Residues 197–301 enclose the Fe2OG dioxygenase domain; that stretch reads DFQGTQAVIQ…RFSMAYLWGP (105 aa). Fe cation is bound by residues H225, D227, and H282. R292 is a catalytic residue. R292 provides a ligand contact to 2-oxoglutarate.

Belongs to the iron/ascorbate-dependent oxidoreductase family. GA3OX subfamily. L-ascorbate serves as cofactor. The cofactor is Fe(2+). In terms of tissue distribution, highly expressed in seedlings but also expressed in roots, leaves, stems, flowers, siliques and seeds. Detected predominantly in the hypocotyl and roots of young seedlings and in the petioles and vasculature of leaves. Not expressed in the shoot apical meristem, but found in the elongation zone, the quiescent center cells and the columella cells of the root tips. Found in the cortex and the endodermis of the embryo axis in germinating seeds.

The catalysed reaction is gibberellin A20 + 2-oxoglutarate + O2 = gibberellin A1 + succinate + CO2. It participates in plant hormone biosynthesis; gibberellin biosynthesis. Converts the inactive gibberellin (GA) precursors GA9 and GA20 in the bioactives gibberellins GA4 and GA1. Involved in the production of bioactive GA for vegetative growth and development. The chain is Gibberellin 3-beta-dioxygenase 2 from Arabidopsis thaliana (Mouse-ear cress).